We begin with the raw amino-acid sequence, 277 residues long: Release factor glutamine methyltransferase (277 aa).

S-adenosyl-L-methionine-binding positions include 117 to 121, D140, W168, and N183; that span reads GTGTG. 183 to 186 contributes to the substrate binding site; that stretch reads NPPY.

This sequence belongs to the protein N5-glutamine methyltransferase family. PrmC subfamily.

It carries out the reaction L-glutaminyl-[peptide chain release factor] + S-adenosyl-L-methionine = N(5)-methyl-L-glutaminyl-[peptide chain release factor] + S-adenosyl-L-homocysteine + H(+). Functionally, methylates the class 1 translation termination release factors RF1/PrfA and RF2/PrfB on the glutamine residue of the universally conserved GGQ motif. In Shigella flexneri, this protein is Release factor glutamine methyltransferase.